A 389-amino-acid chain; its full sequence is Phosphoglycerate kinase (389 aa).

Residues 21–23 (DLN), Arg-36, 59–62 (HLGR), Arg-112, and Arg-145 each bind substrate. ATP contacts are provided by residues Lys-196, Glu-313, and 342 to 345 (GGDT).

The protein belongs to the phosphoglycerate kinase family. In terms of assembly, monomer.

It localises to the cytoplasm. The catalysed reaction is (2R)-3-phosphoglycerate + ATP = (2R)-3-phospho-glyceroyl phosphate + ADP. The protein operates within carbohydrate degradation; glycolysis; pyruvate from D-glyceraldehyde 3-phosphate: step 2/5. In Histophilus somni (strain 2336) (Haemophilus somnus), this protein is Phosphoglycerate kinase.